Reading from the N-terminus, the 338-residue chain is Selenocysteine methyltransferase (338 aa).

The Hcy-binding domain maps to 1-327 (MSSPLITDFL…DTIRGIYKIL (327 aa)). Zn(2+)-binding residues include cysteine 245, cysteine 312, and cysteine 313.

Monomer. It depends on Zn(2+) as a cofactor. As to expression, present in all tissues tested.

It carries out the reaction S-methyl-L-methionine + L-selenocysteine = Se-methyl-L-selenocysteine + L-methionine + H(+). In terms of biological role, catalyzes the methylation of selenocysteine with S-methylmethionine as donor. Does not methylate cysteine. The sequence is that of Selenocysteine methyltransferase (SMTA) from Astragalus bisulcatus (Two-grooved milkvetch).